Here is a 72-residue protein sequence, read N- to C-terminus: Translational regulator CsrA (72 aa).

The protein belongs to the CsrA/RsmA family. Homodimer; the beta-strands of each monomer intercalate to form a hydrophobic core, while the alpha-helices form wings that extend away from the core.

Its subcellular location is the cytoplasm. A translational regulator that binds mRNA to regulate translation initiation and/or mRNA stability. Usually binds in the 5'-UTR at or near the Shine-Dalgarno sequence preventing ribosome-binding, thus repressing translation. Its main target seems to be the major flagellin gene, while its function is anatagonized by FliW. The sequence is that of Translational regulator CsrA from Clostridium novyi (strain NT).